Here is a 603-residue protein sequence, read N- to C-terminus: Elongation factor 4 (603 aa).

The 183-residue stretch at 5–187 folds into the tr-type G domain; the sequence is RHIRNFCIIA…AVVNFVPPPK (183 aa). GTP contacts are provided by residues 17 to 22 and 134 to 137; these read DHGKST and NKID.

The protein belongs to the TRAFAC class translation factor GTPase superfamily. Classic translation factor GTPase family. LepA subfamily.

It localises to the cell membrane. It carries out the reaction GTP + H2O = GDP + phosphate + H(+). Functionally, required for accurate and efficient protein synthesis under certain stress conditions. May act as a fidelity factor of the translation reaction, by catalyzing a one-codon backward translocation of tRNAs on improperly translocated ribosomes. Back-translocation proceeds from a post-translocation (POST) complex to a pre-translocation (PRE) complex, thus giving elongation factor G a second chance to translocate the tRNAs correctly. Binds to ribosomes in a GTP-dependent manner. This Symbiobacterium thermophilum (strain DSM 24528 / JCM 14929 / IAM 14863 / T) protein is Elongation factor 4.